The primary structure comprises 131 residues: Small ribosomal subunit protein bS6 (131 aa).

Residues 96–131 are disordered; it reads VTEASPMAKAKDERDSRRGPAGDRSYDEANAEEIAE. Basic and acidic residues predominate over residues 104–122; it reads KAKDERDSRRGPAGDRSYD.

The protein belongs to the bacterial ribosomal protein bS6 family.

In terms of biological role, binds together with bS18 to 16S ribosomal RNA. This is Small ribosomal subunit protein bS6 from Shewanella sp. (strain MR-4).